A 497-amino-acid chain; its full sequence is Lysophospholipid acyltransferase 5 (497 aa).

A run of 6 helical transmembrane segments spans residues 31–51, 74–94, 100–120, 173–193, 213–235, and 264–286; these read LLTI…ISVI, GLDT…VLLL, IFLA…YFYT, LELL…QFPF, AGVR…LRYL, and SLYK…GLTY. Residues N322 and H358 contribute to the active site. Residues 339–361 form a helical membrane-spanning segment; sequence FLNNRTISYGAALGFLAVWHGYH. N398 is a glycosylation site (N-linked (GlcNAc...) asparagine). The next 2 membrane-spanning stretches (helical) occupy residues 408 to 428 and 435 to 455; these read FITL…AFVF and IVVY…WAAF. The segment at 469–497 is disordered; sequence KLAGEDQKLQDSNTDKLVEEKKPEDKKSE. Positions 470 to 497 are enriched in basic and acidic residues; the sequence is LAGEDQKLQDSNTDKLVEEKKPEDKKSE. S480 bears the Phosphoserine mark.

The protein belongs to the membrane-bound acyltransferase family. As to expression, during gastrulation, expressed mainly along the midline in the presumptive mesoderm. During germ band elongation, expressed in mesoderm and endoderm primordia and in the cephalic furrow. Expression in mesoderm and endoderm lineages continues during germ band shortening. At the end of this process, no longer detected in somatic mesoderm or endoderm layer with expression restricted to anterior and posterior domains of the visceral mesoderm.

The protein resides in the endoplasmic reticulum. The protein localises to the membrane. The catalysed reaction is a 1-acyl-sn-glycero-3-phospho-L-serine + an acyl-CoA = a 1,2-diacyl-sn-glycero-3-phospho-L-serine + CoA. It carries out the reaction 1-(9Z-octadecenoyl)-sn-glycero-3-phospho-L-serine + (9Z)-hexadecenoyl-CoA = 1-(9Z-octadecenoyl)-2-(9Z-hexadecenoyl)-sn-glycero-3-phospho-L-serine + CoA. It catalyses the reaction a 1-acyl-sn-glycero-3-phosphocholine + an acyl-CoA = a 1,2-diacyl-sn-glycero-3-phosphocholine + CoA. The enzyme catalyses 1-hexadecanoyl-sn-glycero-3-phosphocholine + (9Z)-octadecenoyl-CoA = 1-hexadecanoyl-2-(9Z-octadecenoyl)-sn-glycero-3-phosphocholine + CoA. The catalysed reaction is (9Z,12Z)-octadecadienoyl-CoA + 1-hexadecanoyl-sn-glycero-3-phosphocholine = 1-hexadecanoyl-2-(9Z,12Z-octadecadienoyl)-sn-glycero-3-phosphocholine + CoA. It carries out the reaction (5Z,8Z,11Z,14Z)-eicosatetraenoyl-CoA + 1-hexadecanoyl-sn-glycero-3-phosphocholine = 1-hexadecanoyl-2-(5Z,8Z,11Z,14Z-eicosatetraenoyl)-sn-glycero-3-phosphocholine + CoA. It catalyses the reaction (9Z)-hexadecenoyl-CoA + 1-hexadecanoyl-sn-glycero-3-phosphocholine = 1-hexadecanoyl-2-(9Z-hexadecenoyl)-sn-glycero-3-phosphocholine + CoA. Its pathway is lipid metabolism; phospholipid metabolism. Acyltransferase that mediates the acylation of lysophospholipids to produce phospholipids (glycerophospholipids). Highest activity with lysophosphatidylcholine (1-acyl-sn-glycero-3-phosphocholine or LPC) producing phosphatidylcholine (1,2-diacyl-sn-glycero-3-phosphocholine or PC) (LPCAT activity), but also converts lysophosphatidylserine (1-acyl-2-hydroxy-sn-glycero-3-phospho-L-serine or LPS) to phosphatidylserine (1,2-diacyl-sn-glycero-3-phospho-L-serine or PS) (LPSAT activity). Has a preference for unsaturated fatty acids of at least 16 carbons such as oleoyl-CoA ((9Z)-octadecenoyl-CoA) and palmitoleoyl-CoA ((9Z)-hexadecenoyl-CoA). Glycerophospholipids are important structural and functional components of cellular membrane, acyl-chain remodeling regulates the molecular species distribution of glycerophospholipids which can affect membrane fluidity and curvature. Essential for fertility and viability together with Oysgedart (Oys). Required for germ cells to migrate into the mesoderm. The sequence is that of Lysophospholipid acyltransferase 5 from Drosophila melanogaster (Fruit fly).